The sequence spans 566 residues: Acyl-CoA synthetase ALT10 (566 aa).

An AMP-binding site is contributed by 196 to 207; that stretch reads MLFTSGTTGAPK. Positions 473 to 551 are AMP-binding; it reads EVEHAALSHE…DAVHYNRTGK (79 aa).

The protein belongs to the ATP-dependent AMP-binding enzyme family.

Its pathway is mycotoxin biosynthesis. Its function is as follows. Acyl-CoA synthetase; part of the gene cluster that mediates the biosynthesis of the host-selective toxins (HSTs) AAL-toxins, sphinganine-analog mycotoxins responsible for Alternaria stem canker on tomato by the tomato pathotype. The biosynthesis starts with the polyketide synthase ALT1-catalyzed C-16 carbon chain assembly from one starter acetyl-CoA unit with malonyl-CoA extender units. ALT1 also selectively transfers methyl groups at the first and the third cycle of chain elongation for AAL toxin. The C-16 polyketide chain is released from the enzyme by a nucleophilic attack of a carbanion, which is derived from R-carbon of glycin by decarboxylation, on the carbonyl carbon of polyketide acyl chain. This step is probably catalyzed by a pyridoxal 5'-phosphate-dependent aminoacyl transferase ALT4. The respective functions of the other enzymes encoded by the cluster have still to be elucidated. The sphingosine N-acyltransferase-like protein ALT7 seems not to act as a resistance/self-tolerance factor against the toxin in the toxin biosynthetic gene cluster, contrary to what is expected. The protein is Acyl-CoA synthetase ALT10 of Alternaria alternata (Alternaria rot fungus).